The sequence spans 420 residues: Glucose-1-phosphate adenylyltransferase (420 aa).

Alpha-D-glucose 1-phosphate is bound by residues Y107, G172, 187–188, and S205; that span reads EK.

It belongs to the bacterial/plant glucose-1-phosphate adenylyltransferase family. Homotetramer.

It catalyses the reaction alpha-D-glucose 1-phosphate + ATP + H(+) = ADP-alpha-D-glucose + diphosphate. It functions in the pathway glycan biosynthesis; glycogen biosynthesis. In terms of biological role, involved in the biosynthesis of ADP-glucose, a building block required for the elongation reactions to produce glycogen. Catalyzes the reaction between ATP and alpha-D-glucose 1-phosphate (G1P) to produce pyrophosphate and ADP-Glc. This is Glucose-1-phosphate adenylyltransferase from Rhodopseudomonas palustris (strain ATCC BAA-98 / CGA009).